The primary structure comprises 298 residues: Thymidylate synthase (298 aa).

Residues Arg25 and Arg159–Arg160 each bind dUMP. The active-site Nucleophile is Cys179. DUMP-binding positions include Arg200–Asp203, Asn211, and His241–Tyr243. Residue Asp203 coordinates (6R)-5,10-methylene-5,6,7,8-tetrahydrofolate. Ala297 contacts (6R)-5,10-methylene-5,6,7,8-tetrahydrofolate.

The protein belongs to the thymidylate synthase family. Bacterial-type ThyA subfamily. In terms of assembly, homodimer.

The protein resides in the cytoplasm. The enzyme catalyses dUMP + (6R)-5,10-methylene-5,6,7,8-tetrahydrofolate = 7,8-dihydrofolate + dTMP. It participates in pyrimidine metabolism; dTTP biosynthesis. Its function is as follows. Catalyzes the reductive methylation of 2'-deoxyuridine-5'-monophosphate (dUMP) to 2'-deoxythymidine-5'-monophosphate (dTMP) while utilizing 5,10-methylenetetrahydrofolate (mTHF) as the methyl donor and reductant in the reaction, yielding dihydrofolate (DHF) as a by-product. This enzymatic reaction provides an intracellular de novo source of dTMP, an essential precursor for DNA biosynthesis. In Rhodopseudomonas palustris (strain BisA53), this protein is Thymidylate synthase.